Here is a 513-residue protein sequence, read N- to C-terminus: Bifunctional pantoate ligase/cytidylate kinase (513 aa).

The pantoate--beta-alanine ligase stretch occupies residues 1–283 (MVQVFRTIAG…VGSTRLIDNL (283 aa)). Position 30 to 37 (30 to 37 (MGSLHAGH)) interacts with ATP. His-37 serves as the catalytic Proton donor. A (R)-pantoate-binding site is contributed by Gln-61. Gln-61 lines the beta-alanine pocket. 150–153 (GAKD) is an ATP binding site. A (R)-pantoate-binding site is contributed by Gln-156. Residues Val-179 and 187–190 (MSSR) contribute to the ATP site. Residues 284 to 513 (VLNHRLPIIA…IELYKKYNKG (230 aa)) are cytidylate kinase.

It in the N-terminal section; belongs to the pantothenate synthetase family. This sequence in the C-terminal section; belongs to the cytidylate kinase family. Type 1 subfamily.

Its subcellular location is the cytoplasm. It catalyses the reaction (R)-pantoate + beta-alanine + ATP = (R)-pantothenate + AMP + diphosphate + H(+). The enzyme catalyses CMP + ATP = CDP + ADP. It carries out the reaction dCMP + ATP = dCDP + ADP. Its pathway is cofactor biosynthesis; (R)-pantothenate biosynthesis; (R)-pantothenate from (R)-pantoate and beta-alanine: step 1/1. Its function is as follows. Catalyzes the condensation of pantoate with beta-alanine in an ATP-dependent reaction via a pantoyl-adenylate intermediate. In terms of biological role, catalyzes the transfer of a phosphate group from ATP to either CMP or dCMP to form CDP or dCDP and ADP, respectively. The polypeptide is Bifunctional pantoate ligase/cytidylate kinase (Synechocystis sp. (strain ATCC 27184 / PCC 6803 / Kazusa)).